Consider the following 455-residue polypeptide: Glutamyl-tRNA reductase (455 aa).

Residues 49 to 52 (TCNR), Ser-109, 114 to 116 (ETQ), and Gln-120 contribute to the substrate site. Residue Cys-50 is the Nucleophile of the active site. 189–194 (GAGKMG) provides a ligand contact to NADP(+).

The protein belongs to the glutamyl-tRNA reductase family. Homodimer.

The catalysed reaction is (S)-4-amino-5-oxopentanoate + tRNA(Glu) + NADP(+) = L-glutamyl-tRNA(Glu) + NADPH + H(+). It functions in the pathway porphyrin-containing compound metabolism; protoporphyrin-IX biosynthesis; 5-aminolevulinate from L-glutamyl-tRNA(Glu): step 1/2. Functionally, catalyzes the NADPH-dependent reduction of glutamyl-tRNA(Glu) to glutamate 1-semialdehyde (GSA). The protein is Glutamyl-tRNA reductase of Bacillus subtilis (strain 168).